We begin with the raw amino-acid sequence, 479 residues long: Calcium/calmodulin-dependent protein kinase type II delta chain (479 aa).

The Protein kinase domain occupies 14–272 (YQLFEELGKG…ASEALKHPWI (259 aa)). Residues 20–28 (LGKGAFSVV) and Lys-43 contribute to the ATP site. Asp-136 (proton acceptor) is an active-site residue. Thr-287 bears the Phosphothreonine mark. A phosphoserine mark is found at Ser-315 and Ser-319. Thr-337 is modified (phosphothreonine).

It belongs to the protein kinase superfamily. CAMK Ser/Thr protein kinase family. CaMK subfamily. As to quaternary structure, CAMK2 is composed of four different chains: alpha, beta, gamma, and delta. The different isoforms assemble into homo- or heteromultimeric holoenzymes composed of 8 to 12 subunits.

It catalyses the reaction L-seryl-[protein] + ATP = O-phospho-L-seryl-[protein] + ADP + H(+). The enzyme catalyses L-threonyl-[protein] + ATP = O-phospho-L-threonyl-[protein] + ADP + H(+). Its activity is regulated as follows. Autophosphorylation of CAMK2 plays an important role in the regulation of the kinase activity. Functionally, caM-kinase II (CAMK2) is a prominent kinase in the central nervous system. This is Calcium/calmodulin-dependent protein kinase type II delta chain (CAMK2D) from Gallus gallus (Chicken).